The following is a 302-amino-acid chain: MPDIANTAPALQTGTLDWVGMGEIELPFIFESHGITPVTVNAKARAFVNLHKEDAKGIHMSRLFLALDTLSTEQQVNPQTLAQALDFFISSHEGLSDKALIEFKFELPLRRKSLLSDKAGWKSYPVILTSTIEQGVINYELSVDVTYSSTCPCSAALARQLIQNAFAEKFSQETLSQKEALEWLGTTQGIVATPHSQRSIANVKVKLDSNITQFDVVNLINTIEDELKTPVQAAVKREDEQEFARLNGQNLMFCEDAARKIKALLETQQYSDYWLQINHYESLHAHDALAIAVKGVAGGYRA.

This sequence belongs to the GTP cyclohydrolase IV family.

It carries out the reaction GTP + H2O = 7,8-dihydroneopterin 3'-triphosphate + formate + H(+). It functions in the pathway cofactor biosynthesis; 7,8-dihydroneopterin triphosphate biosynthesis; 7,8-dihydroneopterin triphosphate from GTP: step 1/1. Its function is as follows. Converts GTP to 7,8-dihydroneopterin triphosphate. This Pseudoalteromonas translucida (strain TAC 125) protein is GTP cyclohydrolase FolE2.